The following is a 353-amino-acid chain: uncharacterized protein (353 aa).

A disordered region spans residues I69 to S106. The span at S70 to R86 shows a compositional bias: low complexity. Residues G319–G353 are a coiled coil.

This is an uncharacterized protein from Gibberella zeae (strain ATCC MYA-4620 / CBS 123657 / FGSC 9075 / NRRL 31084 / PH-1) (Wheat head blight fungus).